The primary structure comprises 864 residues: DNA mismatch repair protein MutS (864 aa).

An ATP-binding site is contributed by 607-614; the sequence is GPNMGGKS.

This sequence belongs to the DNA mismatch repair MutS family.

This protein is involved in the repair of mismatches in DNA. It is possible that it carries out the mismatch recognition step. This protein has a weak ATPase activity. The protein is DNA mismatch repair protein MutS of Neisseria gonorrhoeae (strain ATCC 700825 / FA 1090).